Here is a 1165-residue protein sequence, read N- to C-terminus: Phenyloxazoline synthase MbtB (1165 aa).

The 74-residue stretch at 5 to 78 (PARSEDIREE…AWAQLVTAGR (74 aa)) folds into the Carrier 1 domain. Ser39 is subject to O-(pantetheine 4'-phosphoryl)serine. A disordered region spans residues 77 to 100 (GRQDTDSAAPPADSSGDPSGETEP). The condensation/cyclization stretch occupies residues 97–393 (ETEPFALAPM…SSLLLDVDLV (297 aa)). Residues 578 to 973 (SYAQLRDQAL…RVPGVRTAVA (396 aa)) form an adenylation region. A Carrier 2 domain is found at 1055-1131 (AASTPLEGAL…ALAAVLRAAE (77 aa)). An O-(pantetheine 4'-phosphoryl)serine modification is found at Ser1090.

The protein belongs to the ATP-dependent AMP-binding enzyme family. MbtB subfamily. The cofactor is pantetheine 4'-phosphate. Post-translationally, 4'-phosphopantetheine is transferred from CoA to a specific serine in each of the two carrier protein domains, leading to their activation from apo to holo forms.

It participates in siderophore biosynthesis; mycobactin biosynthesis. Involved in the initial steps of the mycobactin biosynthetic pathway. Putatively couples activated salicylic acid with serine or threonine and cyclizes this precursor to the hydroxyphenyloxazoline ring system present in this class of siderophores. In Mycolicibacterium paratuberculosis (strain ATCC BAA-968 / K-10) (Mycobacterium paratuberculosis), this protein is Phenyloxazoline synthase MbtB (mbtB).